The chain runs to 349 residues: MKYFFIIALLLSSLYSQTIKDISNIIGIRENQLIGYGLIVGLAGTGDKSKFTMQSLQNLLRNSYIKIPAGSINSKNIAAVMVTADLPPFARQGDKIKVNISTIGDAKSVDHGELLITQLKGVDGNVYALAQGTIVANENNKTTGFIYDGATVENEINFDLQSEDSIQLSLLKNSAKNADLIETKINDTFGKKLATALDTRTIDVKKPDGMSIVKFISLVQNIELESSFKKKLIIDMNRESILAGGDIVIDPVTIARDTFTIRINKTGLGEVDWNNPTINTGVDIGDDVRIADKPVIDINNAMINTKNPPTVADLVRSMKVMKLPMKEIIDTLKMIKDMGAIDVDIELRE.

An N-terminal signal peptide occupies residues 1–16; it reads MKYFFIIALLLSSLYS.

Belongs to the FlgI family. In terms of assembly, the basal body constitutes a major portion of the flagellar organelle and consists of four rings (L,P,S, and M) mounted on a central rod.

Its subcellular location is the periplasm. The protein resides in the bacterial flagellum basal body. In terms of biological role, assembles around the rod to form the L-ring and probably protects the motor/basal body from shearing forces during rotation. The protein is Flagellar P-ring protein of Aliarcobacter butzleri (strain RM4018) (Arcobacter butzleri).